The following is a 209-amino-acid chain: Bacteriorhodopsin (209 aa).

A helical membrane pass occupies residues 1–17 (LWLGTAGMFLGMLYFIA). At 18 to 31 (RGWGETDGRRQKFY) the chain is on the cytoplasmic side. A helical transmembrane segment spans residues 32–50 (IATILITAIAFVNYLAMAL). The Extracellular portion of the chain corresponds to 51–66 (GFGLTFIEFGGEQHPI). A helical membrane pass occupies residues 67–84 (YWARYTDWLFTTPLLLYD). Residues 85-95 (LGLLAGADRNT) are Cytoplasmic-facing. Residues 96–115 (IYSLVSLDVLMIGTGVVATL) traverse the membrane as a helical segment. Over 116-128 (SAGSGVLSAGAER) the chain is Extracellular. Residues 129–148 (LVWWGISTAFLLVLLYFLFS) traverse the membrane as a helical segment. Over 149–166 (SLSGRVANLPSDTRSTFK) the chain is Cytoplasmic. A helical membrane pass occupies residues 167–185 (TLRNLVTVVWLVYPVWWLV). The Extracellular segment spans residues 186 to 197 (GSEGLGLVGIGI). A helical membrane pass occupies residues 198-209 (ETAGFMVIDLVA).

Belongs to the archaeal/bacterial/fungal opsin family.

Its subcellular location is the cell membrane. Light-driven proton pump. This Halobacterium halobium (strain shark) protein is Bacteriorhodopsin (bop).